The primary structure comprises 213 residues: uncharacterized protein (213 aa).

This is an uncharacterized protein from Acanthamoeba polyphaga mimivirus (APMV).